Here is a 968-residue protein sequence, read N- to C-terminus: uncharacterized protein (968 aa).

Residues 12 to 32 form a helical membrane-spanning segment; the sequence is LIFIFSLFFLILFFLESSIGF.

The protein to E.coli YtfN.

Its subcellular location is the membrane. This is an uncharacterized protein from Buchnera aphidicola subsp. Schizaphis graminum (strain Sg).